Here is a 347-residue protein sequence, read N- to C-terminus: NADH-quinone oxidoreductase subunit H (347 aa).

8 helical membrane-spanning segments follow: residues 13 to 33 (LIIA…VAYL), 82 to 102 (GVFL…WAVI), 115 to 135 (VGIL…IMGG), 161 to 181 (IGFV…TDIV), 198 to 218 (FLDW…ISAL), 248 to 268 (FLLF…LMTV), 286 to 306 (VPGI…FAMV), and 325 to 345 (VFLP…KVFG).

This sequence belongs to the complex I subunit 1 family. In terms of assembly, NDH-1 is composed of 14 different subunits. Subunits NuoA, H, J, K, L, M, N constitute the membrane sector of the complex.

It localises to the cell inner membrane. It catalyses the reaction a quinone + NADH + 5 H(+)(in) = a quinol + NAD(+) + 4 H(+)(out). Its function is as follows. NDH-1 shuttles electrons from NADH, via FMN and iron-sulfur (Fe-S) centers, to quinones in the respiratory chain. The immediate electron acceptor for the enzyme in this species is believed to be ubiquinone. Couples the redox reaction to proton translocation (for every two electrons transferred, four hydrogen ions are translocated across the cytoplasmic membrane), and thus conserves the redox energy in a proton gradient. This subunit may bind ubiquinone. In Brucella melitensis biotype 1 (strain ATCC 23456 / CCUG 17765 / NCTC 10094 / 16M), this protein is NADH-quinone oxidoreductase subunit H.